A 666-amino-acid polypeptide reads, in one-letter code: MDIEPTFKGYIEDEDDALLILQATLDGKLKHIPRRPYEIERPYLIVSGSIFVFIEEISGIKRWTDGVSWSPSRISGKFLIYKELDKENAGSNANATSSGSTDSAVITDGTSGARNNPSSSKIKLPPLKNHQFDLPPTMGHSSFESEQDTSISPSNRSNLPLKYTGLVKKTISVKLKRPPFNSIENLHIVSYYSVKDIKQNCLVTPKASPFLKDVRPSQELIVAMGNTTLGNVKNNSTTTGNGPNNINNKSNSSTPLNTVISTNNNSANINAAGSNQFTSANKNYYYKNDESSGYPITQFAPALPSTTLMYTANPPYITQSPDNTNATGMNTHVNNNNNNSNNSSNSNNSNNNNNNNNNNNNNNNNNINNINNVNTNAGNGNNPNRFHNASFAYNTTGDFINPQQQGQISYPFYYTTIPINNPNYYTTQPPNPVTNASTNENQGYSTSSTQHPYYGHPTESQSASAAAGATGTPGTAENVLPVSSMQPLLHQANNNSASSATSTAPYPVYSMNVNVPYYNSSASAYKRAQENTTSNTNAEPSGATSTNSGTMLSNPAYANSQYTPSQVYYQGFPQYAMASAQNPSMYQHQHQHPLPTVYPIATPQQNIMSSGHTLSTIGSDPQHHHYQQEPNDHKNFAMGHANNNILNITNNDTMNNLNTNTSTTTQ.

Over residues 90 to 104 (GSNANATSSGSTDSA) the composition is skewed to low complexity. Disordered stretches follow at residues 90–157 (GSNA…SNRS), 232–254 (VKNNSTTTGNGPNNINNKSNSST), 314–389 (PPYI…FHNA), 425–479 (YTTQ…AENV), and 528–552 (AQENTTSNTNAEPSGATSTNSGTML). 2 stretches are compositionally biased toward polar residues: residues 108–121 (DGTSGARNNPSSSK) and 139–157 (GHSSFESEQDTSISPSNRS). Position 152 is a phosphoserine (Ser-152). The span at 233–254 (KNNSTTTGNGPNNINNKSNSST) shows a compositional bias: low complexity. The segment covering 314 to 333 (PPYITQSPDNTNATGMNTHV) has biased composition (polar residues). The span at 334 to 384 (NNNNNNSNNSSNSNNSNNNNNNNNNNNNNNNNNINNINNVNTNAGNGNNPN) shows a compositional bias: low complexity. Polar residues predominate over residues 436–451 (ASTNENQGYSTSSTQH). The span at 460–476 (SQSASAAAGATGTPGTA) shows a compositional bias: low complexity. Positions 530–552 (ENTTSNTNAEPSGATSTNSGTML) are enriched in polar residues.

This sequence belongs to the MIT1/WOR1 family.

It localises to the cytoplasm. Its subcellular location is the nucleus. Functionally, transcriptional regulator of pseudohyphal growth. The protein is Transcriptional regulator MIT1 (MIT1) of Saccharomyces cerevisiae (strain ATCC 204508 / S288c) (Baker's yeast).